Reading from the N-terminus, the 438-residue chain is Ribosome biogenesis protein NOP53 (438 aa).

Disordered stretches follow at residues 1-23 (MVAG…WRKG) and 247-346 (HPKY…RKKE). The span at 12 to 21 (GSRHNKKYWR) shows a compositional bias: basic residues. 3 stretches are compositionally biased toward basic and acidic residues: residues 265–288 (KSMK…MTKE), 297–318 (QKLD…DSHN), and 325–346 (LHKE…RKKE).

The protein belongs to the NOP53 family.

It localises to the nucleus. The protein resides in the nucleolus. The protein localises to the nucleoplasm. Its function is as follows. May play a role in ribosome biogenesis, being required for integration of the 5S RNP into the ribosomal large subunit. This chain is Ribosome biogenesis protein NOP53, found in Caenorhabditis elegans.